The sequence spans 147 residues: Hordoindoline-B2 (147 aa).

An N-terminal signal peptide occupies residues 1 to 19; that stretch reads MKTLFLLALLALVASTTSA. Positions 20-28 are excised as a propeptide; it reads QYSVGGGYN.

Five disulfide bonds are present. In terms of tissue distribution, found in endosperm and aleurone layer of developing kernels, but not in the embryo.

Its subcellular location is the membrane. It localises to the secreted. The protein resides in the extracellular space. In terms of biological role, acts as a membranotoxin, probably through its antibacterial and antifungal activities, contributing to the defense mechanism of the plant against predators. Forms monovalent cation-selective ion channels in membranes. Contributes to grain texture and hardness. The protein is Hordoindoline-B2 (HINB-2) of Hordeum vulgare (Barley).